Consider the following 194-residue polypeptide: Phosphoheptose isomerase (194 aa).

The 158-residue stretch at 37–194 (IANSFKQGGK…LIEFEMAKTA (158 aa)) folds into the SIS domain. 52–54 (NGG) is a substrate binding site. The Zn(2+) site is built by His-61 and Glu-65. Substrate contacts are provided by residues Glu-65, 93 to 94 (ND), 119 to 121 (STS), Ser-124, and Gln-172. Residues Gln-172 and His-180 each contribute to the Zn(2+) site.

This sequence belongs to the SIS family. GmhA subfamily. In terms of assembly, homotetramer. Zn(2+) serves as cofactor.

It localises to the cytoplasm. The catalysed reaction is 2 D-sedoheptulose 7-phosphate = D-glycero-alpha-D-manno-heptose 7-phosphate + D-glycero-beta-D-manno-heptose 7-phosphate. It functions in the pathway carbohydrate biosynthesis; D-glycero-D-manno-heptose 7-phosphate biosynthesis; D-glycero-alpha-D-manno-heptose 7-phosphate and D-glycero-beta-D-manno-heptose 7-phosphate from sedoheptulose 7-phosphate: step 1/1. The protein operates within bacterial outer membrane biogenesis; LOS core biosynthesis. Catalyzes the isomerization of sedoheptulose 7-phosphate in D-glycero-D-manno-heptose 7-phosphate. In Haemophilus ducreyi (strain 35000HP / ATCC 700724), this protein is Phosphoheptose isomerase.